A 186-amino-acid chain; its full sequence is Zein-alpha PZ19.1 (186 aa).

The N-terminal stretch at 1–21 (MAAKIFCLIMLLGLSASAATA) is a signal peptide.

This sequence belongs to the zein family.

Its function is as follows. Zeins are major seed storage proteins. This is Zein-alpha PZ19.1 from Zea mays (Maize).